The following is a 445-amino-acid chain: Mitochondrial-processing peptidase subunit alpha-2 (445 aa).

A mitochondrion-targeting transit peptide spans 1–13 (MIGRFIARNYTTS).

Belongs to the peptidase M16 family. As to quaternary structure, heterodimer of alpha and beta subunits, forming the mitochondrial processing protease (MPP) in which subunit alpha is involved in substrate recognition and binding and subunit beta is the catalytic subunit.

It is found in the mitochondrion matrix. Its function is as follows. Substrate recognition and binding subunit of the essential mitochondrial processing protease (MPP), which cleaves the mitochondrial sequence off newly imported precursors proteins. The polypeptide is Mitochondrial-processing peptidase subunit alpha-2 (mppA2) (Dictyostelium discoideum (Social amoeba)).